Consider the following 424-residue polypeptide: Enolase (424 aa).

Q162 is a binding site for (2R)-2-phosphoglycerate. E204 functions as the Proton donor in the catalytic mechanism. Mg(2+) contacts are provided by D241, E284, and D311. 4 residues coordinate (2R)-2-phosphoglycerate: K336, R365, S366, and K387. The Proton acceptor role is filled by K336.

This sequence belongs to the enolase family. The cofactor is Mg(2+).

The protein localises to the cytoplasm. It localises to the secreted. The protein resides in the cell surface. The enzyme catalyses (2R)-2-phosphoglycerate = phosphoenolpyruvate + H2O. It functions in the pathway carbohydrate degradation; glycolysis; pyruvate from D-glyceraldehyde 3-phosphate: step 4/5. In terms of biological role, catalyzes the reversible conversion of 2-phosphoglycerate (2-PG) into phosphoenolpyruvate (PEP). It is essential for the degradation of carbohydrates via glycolysis. The protein is Enolase of Rhizobium meliloti (strain 1021) (Ensifer meliloti).